Here is a 402-residue protein sequence, read N- to C-terminus: NADH-quinone oxidoreductase subunit D (402 aa).

The protein belongs to the complex I 49 kDa subunit family. In terms of assembly, NDH-1 is composed of 14 different subunits. Subunits NuoB, C, D, E, F, and G constitute the peripheral sector of the complex.

Its subcellular location is the cell inner membrane. The catalysed reaction is a quinone + NADH + 5 H(+)(in) = a quinol + NAD(+) + 4 H(+)(out). Functionally, NDH-1 shuttles electrons from NADH, via FMN and iron-sulfur (Fe-S) centers, to quinones in the respiratory chain. The immediate electron acceptor for the enzyme in this species is believed to be ubiquinone. Couples the redox reaction to proton translocation (for every two electrons transferred, four hydrogen ions are translocated across the cytoplasmic membrane), and thus conserves the redox energy in a proton gradient. The polypeptide is NADH-quinone oxidoreductase subunit D (Rhodopseudomonas palustris (strain TIE-1)).